The chain runs to 429 residues: Histidine--tRNA ligase (429 aa).

Belongs to the class-II aminoacyl-tRNA synthetase family. In terms of assembly, homodimer.

The protein localises to the cytoplasm. The enzyme catalyses tRNA(His) + L-histidine + ATP = L-histidyl-tRNA(His) + AMP + diphosphate + H(+). This is Histidine--tRNA ligase from Oceanobacillus iheyensis (strain DSM 14371 / CIP 107618 / JCM 11309 / KCTC 3954 / HTE831).